We begin with the raw amino-acid sequence, 133 residues long: Small ribosomal subunit protein uS8 (133 aa).

It belongs to the universal ribosomal protein uS8 family. In terms of assembly, part of the 30S ribosomal subunit.

Its function is as follows. One of the primary rRNA binding proteins, it binds directly to 16S rRNA central domain where it helps coordinate assembly of the platform of the 30S subunit. This chain is Small ribosomal subunit protein uS8, found in Metallosphaera sedula (strain ATCC 51363 / DSM 5348 / JCM 9185 / NBRC 15509 / TH2).